A 263-amino-acid polypeptide reads, in one-letter code: N-acyl homoserine lactonase AttM (263 aa).

Zn(2+) is bound by residues His-103, His-105, Asp-107, His-108, His-180, Asp-202, and His-247.

Belongs to the metallo-beta-lactamase superfamily. Zn(2+) serves as cofactor.

It carries out the reaction an N-acyl-L-homoserine lactone + H2O = an N-acyl-L-homoserine + H(+). The chain is N-acyl homoserine lactonase AttM from Azorhizobium caulinodans (strain ATCC 43989 / DSM 5975 / JCM 20966 / LMG 6465 / NBRC 14845 / NCIMB 13405 / ORS 571).